A 111-amino-acid chain; its full sequence is uncharacterized protein (111 aa).

In terms of assembly, homodimer, or homotetramer.

This is an uncharacterized protein from Bacillus subtilis (strain 168).